A 288-amino-acid polypeptide reads, in one-letter code: Type II iodothyronine deiodinase (288 aa).

The Lumenal segment spans residues 1–5; sequence MPHVN. A helical; Signal-anchor for type III membrane protein transmembrane segment spans residues 6 to 26; it reads LLVVLLILPGVFSNCLFLALY. The Cytoplasmic portion of the chain corresponds to 27-288; sequence DAVSFLRRAL…SFLESVKASR (262 aa). Residues 99–130 are disordered; that stretch reads SCAASSSSSHETPTPRTTAEAAATVTTSTTTT. U160 is a catalytic residue. Position 160 (U160) is a non-standard amino acid, selenocysteine.

Belongs to the iodothyronine deiodinase family. In terms of assembly, predominantly monomer. Can form homodimers but homodimerization is not essential for enzyme activity. As to expression, expressed in intestine, liver, kidney and brain of immediately premetamorphic larvae, of larvae in all stages of metamorphosis and of parasitic feeding juveniles. In immediately premetamorphic larvae, levels are significantly higher in intestine and liver than in kidney and brain.

The protein resides in the endoplasmic reticulum membrane. It catalyses the reaction 3,3',5-triiodo-L-thyronine + iodide + A + H(+) = L-thyroxine + AH2. It carries out the reaction 3,3'-diiodo-L-thyronine + iodide + A + H(+) = 3,3',5'-triiodo-L-thyronine + AH2. The enzyme catalyses 3'-iodo-L-thyronine + iodide + A + H(+) = 3',5'-diiodo-L-thyronine + AH2. The catalysed reaction is 3,3'-diiodothyronamine + iodide + A + H(+) = 3,3',5'-triiodothyronamine + AH2. It catalyses the reaction 3'-iodothyronamine + iodide + A + H(+) = 3',5'-diiodothyronamine + AH2. Functionally, plays a crucial role in the metabolism of thyroid hormones (TH) and has specific roles in TH activation and inactivation by deiodination. Catalyzes the deiodination of L-thyroxine (T4) to 3,5,3'-triiodothyronine (T3), 3,3',5'-triiodothyronine (rT3) to 3,3'-diiodothyronine (3,3'-T2) and 3',5'-diiodothyronine (3',5'-T2) to 3'-monoiodothyronine (3'-T1) via outer-ring deiodination (ORD). Catalyzes the phenolic ring deiodinations of 3,3',5'-triiodothyronamine and 3',5'- diiodothyronamine. The protein is Type II iodothyronine deiodinase of Petromyzon marinus (Sea lamprey).